Consider the following 91-residue polypeptide: Large ribosomal subunit protein eL43 (91 aa).

The C4-type zinc finger occupies 39 to 60 (CSFCGKDAVRRSSVGIWKCNGC).

This sequence belongs to the eukaryotic ribosomal protein eL43 family.

This Dictyostelium discoideum (Social amoeba) protein is Large ribosomal subunit protein eL43 (rpl37A).